The following is a 590-amino-acid chain: MSVVEEATDDALYPIAVLIDELRNEDVTLRLNSIRKLSTIALALGVERTRNELIQFLTDTIYDEDEVLLVLAEQLGNFTPLVGGPDHVHCLLLPLENLATVEETVVRDKAVESLRKIADKHSSASLEEHFVPMLRRLATGDWFTSRTSACGLFSVVYPRVSPAIKSELKSMFRTLCRDDTPMVRRAAAAKLGEFAKVFEKTAVIEGLHSSLTDLHVDEQDSVRLLTVESAIAFGTLLDKANKKKLIEPILIELFDDKSWRVRYMVAEKLIEIQNVLGEDMDTTHLVNMYTNLLKDPEGEVRCAATQRLQEFALNLPEDKRQNIICNSLLNVAKELVTDGNQLVKSELAGVIMGLAPLIGKEQTVSELLPIYMQLLNDQTPEVRLNIISSLDKVNEVIGAAQLSTSLLPAIVGLAEDGKWRVRLAIVQFMPLLASQLGQEFFDEKLLPLCLNWLTDHVFSIREASTLIMKELTQKFGGQWASTNIVPKMQKLQKDTNYLQRMTCLFCLNTLSEAMTQEQILKEIMPIVKDLVEDDVPNVRFNAAKSLKRIGKNLTPSTLTSEVKPLLEKLGKDSDFDVRYFSEEAKNSLGL.

HEAT repeat units lie at residues 37-73 (LSTI…VLAE), 74-111 (QLGN…DKAV), 113-150 (SLRK…TSAC), 151-188 (GLFS…RAAA), 189-227 (AKLG…LLTV), 228-266 (ESAI…YMVA), 267-305 (EKLI…CAAT), 306-344 (QRLQ…QLVK), 349-387 (GVIM…LNII), 388-426 (SSLD…LAIV), 427-465 (QFMP…EAST), 466-504 (LIMK…MTCL), 505-543 (FCLN…FNAA), and 544-582 (KSLK…YFSE).

The protein belongs to the phosphatase 2A regulatory subunit A family. As to quaternary structure, part of a complex consisting of a common heterodimeric core enzyme, composed of catalytic subunit let-92 and constant regulatory subunit paa-1, that associates with a variety of regulatory subunits which confer distinct properties to the holoenzyme. Interacts with rsa-1.

It is found in the cytoplasm. Its subcellular location is the cytoskeleton. It localises to the microtubule organizing center. The protein localises to the centrosome. The protein resides in the spindle. Its function is as follows. Acts as a scaffolding protein for phosphatase let-92 and its regulatory subunits. Probably together with let-92 and regulatory subunit sur-6, regulates centriole duplication, microtubule outgrowth and mitotic spindle stability during early embryonic cell division by preventing the degradation of sas-5 and kinase zyg-1. During vulva development, may play a role with phosphatase let-92 and regulatory subunit sur-6 in the induction of vulva cell precursors by positively regulating let-60/Ras-MAP kinase signaling, probably by promoting lin-45 activation. Plays a positive role in axon guidance probably by inhibiting phosphatase let-92. The protein is Probable serine/threonine-protein phosphatase PP2A regulatory subunit (paa-1) of Caenorhabditis elegans.